The sequence spans 142 residues: METLAAINRWLAKQHVVTWCVHHEGELWCANAFYYYDPDRVAFYVLSEDKTRHAQMTGTRAKVAGTINGQPKNVALIRGVQFQGEIRRLEGEESDSMRRQYTRRFPVALALSAPVWEIRPDELKFTDNTLGFGKKLHWLRAE.

It belongs to the UPF0306 family.

This chain is UPF0306 protein Ent638_3591, found in Enterobacter sp. (strain 638).